Consider the following 163-residue polypeptide: ATP synthase subunit b 1 (163 aa).

A helical transmembrane segment spans residues 7–27; it reads PETWVAIAFVILMGLFAYLGV.

It belongs to the ATPase B chain family. F-type ATPases have 2 components, F(1) - the catalytic core - and F(0) - the membrane proton channel. F(1) has five subunits: alpha(3), beta(3), gamma(1), delta(1), epsilon(1). F(0) has three main subunits: a(1), b(2) and c(10-14). The alpha and beta chains form an alternating ring which encloses part of the gamma chain. F(1) is attached to F(0) by a central stalk formed by the gamma and epsilon chains, while a peripheral stalk is formed by the delta and b chains.

It localises to the cell inner membrane. Its function is as follows. F(1)F(0) ATP synthase produces ATP from ADP in the presence of a proton or sodium gradient. F-type ATPases consist of two structural domains, F(1) containing the extramembraneous catalytic core and F(0) containing the membrane proton channel, linked together by a central stalk and a peripheral stalk. During catalysis, ATP synthesis in the catalytic domain of F(1) is coupled via a rotary mechanism of the central stalk subunits to proton translocation. Component of the F(0) channel, it forms part of the peripheral stalk, linking F(1) to F(0). The sequence is that of ATP synthase subunit b 1 from Bradyrhizobium sp. (strain BTAi1 / ATCC BAA-1182).